We begin with the raw amino-acid sequence, 127 residues long: uncharacterized protein (127 aa).

This is an uncharacterized protein from Rickettsia conorii (strain ATCC VR-613 / Malish 7).